The primary structure comprises 133 residues: p53 and DNA damage-regulated protein 1 (133 aa).

This sequence belongs to the prefoldin subunit beta family. Component of the PAQosome complex which is responsible for the biogenesis of several protein complexes and which consists of R2TP complex members RUVBL1, RUVBL2, RPAP3 and PIH1D1, URI complex members PFDN2, PFDN6, PDRG1, UXT and URI1 as well as ASDURF, POLR2E and DNAAF10/WDR92. In terms of tissue distribution, predominantly expressed in normal testis and exhibits reduced but detectable expression in other organs.

The protein resides in the cytoplasm. May play a role in chaperone-mediated protein folding. This chain is p53 and DNA damage-regulated protein 1 (PDRG1), found in Homo sapiens (Human).